The primary structure comprises 130 residues: Small ribosomal subunit protein uS11 (130 aa).

It belongs to the universal ribosomal protein uS11 family. Part of the 30S ribosomal subunit. Interacts with proteins S7 and S18. Binds to IF-3.

Functionally, located on the platform of the 30S subunit, it bridges several disparate RNA helices of the 16S rRNA. Forms part of the Shine-Dalgarno cleft in the 70S ribosome. This Prochlorococcus marinus (strain MIT 9313) protein is Small ribosomal subunit protein uS11.